The primary structure comprises 152 residues: Small ribosomal subunit protein uS13 (152 aa).

The protein belongs to the universal ribosomal protein uS13 family. Component of the small ribosomal subunit.

It is found in the cytoplasm. Component of the small ribosomal subunit. The ribosome is a large ribonucleoprotein complex responsible for the synthesis of proteins in the cell. Plays an essential role in early embryonic development. This Danio rerio (Zebrafish) protein is Small ribosomal subunit protein uS13 (rps18).